The primary structure comprises 444 residues: UDP-N-acetylmuramate--L-alanine ligase (444 aa).

111 to 117 (GAHGKTS) is a binding site for ATP.

It belongs to the MurCDEF family.

It is found in the cytoplasm. The enzyme catalyses UDP-N-acetyl-alpha-D-muramate + L-alanine + ATP = UDP-N-acetyl-alpha-D-muramoyl-L-alanine + ADP + phosphate + H(+). Its pathway is cell wall biogenesis; peptidoglycan biosynthesis. Functionally, cell wall formation. The chain is UDP-N-acetylmuramate--L-alanine ligase from Leuconostoc citreum (strain KM20).